A 338-amino-acid chain; its full sequence is Tagatose 1,6-diphosphate aldolase (338 aa).

It belongs to the aldolase LacD family.

It catalyses the reaction D-tagatofuranose 1,6-bisphosphate = D-glyceraldehyde 3-phosphate + dihydroxyacetone phosphate. It participates in carbohydrate metabolism; D-tagatose 6-phosphate degradation; D-glyceraldehyde 3-phosphate and glycerone phosphate from D-tagatose 6-phosphate: step 2/2. This is Tagatose 1,6-diphosphate aldolase from Listeria innocua serovar 6a (strain ATCC BAA-680 / CLIP 11262).